A 266-amino-acid polypeptide reads, in one-letter code: Single-stranded DNA-binding protein WHY1, chloroplastic (266 aa).

The transit peptide at 1-37 directs the protein to the chloroplast; that stretch reads MPPPAPLFLSLASTPPPALMPVHHPRAPQSLTLVPPV. The tract at residues 53–81 is disordered; it reads SPRHSDYFDPRAPPPPRGDGGYGRPPNGA. The required for ssDNA binding stretch occupies residues 94-99; the sequence is KGKAAL. The Nuclear localization signal motif lies at 172–185; the sequence is KGRSEEGKVRKVLK.

This sequence belongs to the Whirly family. As to quaternary structure, homotetramer.

Its subcellular location is the plastid. The protein localises to the chloroplast stroma. The protein resides in the nucleus. Its function is as follows. Single-stranded DNA and RNA binding protein that maintains plastid genome stability by preventing break-induced and short homology-dependent illegitimate recombinations. Functions in RNA metabolism and is involved in the maturation of the atpF and 23S ribosomal RNAs. This Zea mays (Maize) protein is Single-stranded DNA-binding protein WHY1, chloroplastic (WHY1).